A 285-amino-acid chain; its full sequence is Phosphatidylserine decarboxylase proenzyme (285 aa).

Residues D89, H146, and S252 each act as charge relay system; for autoendoproteolytic cleavage activity in the active site. The active-site Schiff-base intermediate with substrate; via pyruvic acid; for decarboxylase activity is S252. Position 252 is a pyruvic acid (Ser); by autocatalysis (S252).

It belongs to the phosphatidylserine decarboxylase family. PSD-B subfamily. Prokaryotic type I sub-subfamily. As to quaternary structure, heterodimer of a large membrane-associated beta subunit and a small pyruvoyl-containing alpha subunit. Requires pyruvate as cofactor. Is synthesized initially as an inactive proenzyme. Formation of the active enzyme involves a self-maturation process in which the active site pyruvoyl group is generated from an internal serine residue via an autocatalytic post-translational modification. Two non-identical subunits are generated from the proenzyme in this reaction, and the pyruvate is formed at the N-terminus of the alpha chain, which is derived from the carboxyl end of the proenzyme. The autoendoproteolytic cleavage occurs by a canonical serine protease mechanism, in which the side chain hydroxyl group of the serine supplies its oxygen atom to form the C-terminus of the beta chain, while the remainder of the serine residue undergoes an oxidative deamination to produce ammonia and the pyruvoyl prosthetic group on the alpha chain. During this reaction, the Ser that is part of the protease active site of the proenzyme becomes the pyruvoyl prosthetic group, which constitutes an essential element of the active site of the mature decarboxylase.

The protein resides in the cell membrane. The enzyme catalyses a 1,2-diacyl-sn-glycero-3-phospho-L-serine + H(+) = a 1,2-diacyl-sn-glycero-3-phosphoethanolamine + CO2. The protein operates within phospholipid metabolism; phosphatidylethanolamine biosynthesis; phosphatidylethanolamine from CDP-diacylglycerol: step 2/2. Its function is as follows. Catalyzes the formation of phosphatidylethanolamine (PtdEtn) from phosphatidylserine (PtdSer). The protein is Phosphatidylserine decarboxylase proenzyme of Vibrio vulnificus (strain CMCP6).